The following is a 142-amino-acid chain: Large ribosomal subunit protein uL13 (142 aa).

The protein belongs to the universal ribosomal protein uL13 family. In terms of assembly, part of the 50S ribosomal subunit.

Its function is as follows. This protein is one of the early assembly proteins of the 50S ribosomal subunit, although it is not seen to bind rRNA by itself. It is important during the early stages of 50S assembly. This chain is Large ribosomal subunit protein uL13, found in Psychrobacter sp. (strain PRwf-1).